The primary structure comprises 1666 residues: MGPAAGPSLLLLLLASVSLALGDPMYSIITPNILRLENEETVVLEAHEVQGDIPVTVTVHDFPAKKNVLSSEKTVLTSATGYLGTVTIKIPASKEFKSDKGRKLVVVQAAFGGTQLEKVVLVSLQSGYLFIQTDKTIYTPGSTVLYRIFTVDSDLLPVGRTIIVTIETPDGIPIKRDTLSSNNQHGILPLSWNIPELVNMGQWKIQAFYENSPKQVFSAEFEVKEYVLPSFEVLVEPTEKFYYIDDPKGLEVNIIARFLYGKNVDGTAFVIFGVQDGDQRISLAQSLTRVVIEDGSGEVVLSRQVLLDGVQPSRPEALVGKSLYVSVTVILHSGSDMVEAERSGIPIVTSPYQIHFTKTPKYFKPAMPFEIMVLVTNPDGSPAPHVPVVTQGSNVQSLTQADGVARLSINTPNTRQPLSVTVQTKKGGIPDARQAINTMQALPYTTMYNSNNYLHLSMPRTELKPGETINVNFHLRSDPNQEAKIRYYTYLIMNKGKLLKVGRQPREPGQALVVLPMPITKELIPSFRLVAYYTLIGASAQREVVADSVWADVRDSCVGTLVVKGGSGKDGQDKRQQHLPRQQMTLRIEGNQGARVGLVAVDKGVFVLNKKHKLTQSKIWDVVEKADIGCTPGSGKDYAGVFTDAGLSFKSSKAGLQTAQREGLDCPKPAARRRRSVQLMERRMDKAGKYKSKELRRCCEDGMRENPMQFSCQRRARYVSLGEACVKAFLDCCTYMAQLRQQHRREQNLGLARSDMDEDIIPEEDIISRSQFPESWLWTIEELKEPERNGISTKTMNIFLKDSITTWEILAVSLSDKKGICVADPFEVTVMQDFFIDLRLPYSVVRNEQVEIRAVLYNYREAQSLKVRVELLHNPAFCSLATAKKRHTQTVTIGPKSSVAVPYVLVPLKIGLQEVEVKAAVYNYFISDGVKKTLKVVPEGMRVNKTVAIRTLNPEQLGQGGVQREEIPAADLSDQVPDTDSETKILLQGTPVAQMAEDAVDAERLKHLIITPSGCGEQNMIGMTPTVIAVHYLDQTEQWEKFGLEKRQEALNLINRGYTQQLAFKQPNWAYAAFKNRASSTWLTAYVVKVFSLAANLIGIDSEVLCGAVKWLILEKQKPDGVFQEDGPVIHQEMIGGVRTAQEADVSLTAFVLIALQEAKDICRAQVNNLEANINKAGDYIESRYADVRRPYTLAIAGYALALLERLNGATLQKFLNAATEKNRWEEARQKLYSVEATSYALLALLLLKDFDAVPPVVRWLNEQRYYGRGYGSTQATFMVFQALAQYQTDVPDHKDLNMEVALQLPSRSSPSKFRLVWEAGSLLRSEATKQNEGFKLTAKGKGQGTLSVVAVYYAKTKRKVVCKNFDLRVTLKPAPDTVKKPQEAKSTMILGICTRYLGDQDATMSILDISMMTGFIPDTDDLKLLATGVDRYISKYEMNKDFSKNTLIIYLDKVSHSEEECLSFKIHQFFNVGLIQPGSVKVYSYYNLDETCTQFYHPEKEDGMLNKLCHKDLCRCAEENCFIQLPEKITLDERLEKACEPGVDYVYKTKLLKMELSDDFDEYIMTIEQVIKSGSDEVQAGKERRFISHIKCRDALHLKEGKHYLMWGLSSDLWGERPNMSYIIGKDTWVEAWPEAEECQDEENQQQCQDLGTFTENMVVFGCPN.

The signal sequence occupies residues 1-22 (MGPAAGPSLLLLLLASVSLALG). A phosphoserine mark is found at serine 70, serine 296, and serine 302. 13 disulfide bridges follow: cysteine 557–cysteine 821, cysteine 630–cysteine 666, cysteine 698–cysteine 725, cysteine 699–cysteine 732, cysteine 712–cysteine 733, cysteine 878–cysteine 1517, cysteine 1106–cysteine 1163, cysteine 1363–cysteine 1493, cysteine 1394–cysteine 1462, cysteine 1510–cysteine 1515, cysteine 1522–cysteine 1593, cysteine 1540–cysteine 1664, and cysteine 1640–cysteine 1649. Position 676 is a phosphoserine (serine 676). One can recognise an Anaphylatoxin-like domain in the interval 698 to 733 (CCEDGMRENPMQFSCQRRARYVSLGEACVKAFLDCC). N-linked (GlcNAc...) asparagine glycosylation occurs at asparagine 944. The residue at position 973 (serine 973) is a Phosphoserine. Positions 1015 to 1018 (CGEQ) form a cross-link, isoglutamyl cysteine thioester (Cys-Gln). At serine 1326 the chain carries Phosphoserine. The NTR domain maps to 1522–1664 (CFIQLPEKIT…FTENMVVFGC (143 aa)). Phosphoserine is present on serine 1576. N-linked (GlcNAc...) asparagine glycosylation occurs at asparagine 1620. The interaction with CFP/properdin stretch occupies residues 1637-1662 (AEECQDEENQQQCQDLGTFTENMVVF).

As to quaternary structure, in absence of complement activation, the C3 precursor is first processed by the removal of 4 Arg residues, forming two chains, beta and alpha, linked by a disulfide bond. Complement C3b is composed of complement C3b and complement C3 beta chains that are associated via disulfide bonds. Non-enzymatic component of the C5 convertase, also named C4bC2bC3b, composed of the serine protease complement C2b (C2), complement C3b, as well as complement C4b (C4). Non-enzymatic component of the C5 convertase of the alternative complement pathways composed of the serine protease complement CFB and complement C3b. Interacts with CFP; interaction takes place together with CFB in the alternative complement system and allows the complex to become active. Interacts with CR1 (via Sushi 8 and Sushi 9 domains). Interacts with CFH. In terms of assembly, interacts with CFH. Interacts with CR2. As to quaternary structure, during pregnancy, C3dg exists as a complex (probably a 2:2:2 heterohexamer) with AGT and the proform of PRG2. Interacts with CR2 (via the N-terminal Sushi domains 1 and 2). In terms of processing, C3 precursor is first processed by the removal of 4 Arg residues, forming two chains, beta and alpha, linked by a disulfide bond. During activation of the complement systems, the alpha chain is cleaved into C3a and C3b by the C3 convertase: C3b stays linked to the beta chain, while C3a is released in the plasma. The alpha chain is cleaved by the serine protease complement C2b component of the C3 convertase to generate C3a and C3b following activation by the classical, lectin and GZMK complement systems. The alpha chain is cleaved by CFB component of the C3 convertase to generate C3a and C3b following activation by the alternative complement system. Post-translationally, C3a is further processed by carboxypeptidases to release the C-terminal arginine residue generating the acylation stimulating protein (ASP). Levels of ASP are increased in adipocytes in the postprandial period and by insulin and dietary chylomicrons. Complement C3b is rapidly split in two positions by factor I (CFI) and a cofactor (CFH) to form iC3b (inactivated C3b) and C3f which is released. CFI and CFH catalyze proteolytic degradation of already-deposited complement C3b. Then iC3b is slowly cleaved (possibly by CFI) to form C3c (beta chain + alpha' chain fragment 1 + alpha' chain fragment 2), C3dg and C3f. Other proteases produce other fragments such as C3d or C3g. In terms of processing, upon activation, the internal thioester bond reacts with carbohydrate antigens on the target surface to form amide or ester bonds, leading to covalent association with the surface of pathogens. Post-translationally, complement C3b interacts with complement C4b via a thioester linkage. Phosphorylated by FAM20C in the extracellular medium.

Its subcellular location is the secreted. It localises to the cell surface. With respect to regulation, complement activation is inhibited by VSIG4. Precursor of non-enzymatic components of the classical, alternative, lectin and GZMK complement pathways, which consist in a cascade of proteins that leads to phagocytosis and breakdown of pathogens and signaling that strengthens the adaptive immune system. Functionally, non-enzymatic component of C5 convertase. Generated following cleavage by C3 convertase, it covalently attaches to the surface of pathogens, where it acts as an opsonin that marks the surface of antigens for removal. Complement C3b binds covalently via its reactive thioester, to cell surface carbohydrates or immune aggregates. Together with complement C4b, it then recruits the serine protease complement C2b to form the C5 convertase, which cleaves and activate C5, the next component of the complement pathways. In the alternative complement pathway, recruits the serine protease CFB to form the C5 convertase that cleaves and activates C5. In terms of biological role, mediator of local inflammatory process released following cleavage by C3 convertase. Acts by binding to its receptor, C3AR1, activating G protein-coupled receptor signaling, promoting the phosphorylation, ARRB2-mediated internalization and endocytosis of C3AR1. C3a anaphylatoxin stimulates the activation of immune cells such as mast cells and basophilic leukocytes to release inflammation agents, such as cytokines, chemokines and histamine, which promote inflammation development. Also acts as potent chemoattractant for the migration of macrophages and neutrophils to the inflamed tissues, resulting in neutralization of the inflammatory triggers by multiple ways, such as phagocytosis and generation of reactive oxidants. Its function is as follows. Adipogenic hormone that stimulates triglyceride synthesis and glucose transport in adipocytes, regulating fat storage and playing a role in postprandial triglyceride clearance. Appears to stimulate triglyceride synthesis via activation of the PLC, MAPK and AKT signaling pathways. Acts by binding to its receptor, C5AR2, activating G protein-coupled receptor signaling, promoting the phosphorylation, ARRB2-mediated internalization and endocytosis of C5AR2. Acts as a chemoattractant for neutrophils in chronic inflammation. The sequence is that of Complement C3 from Cavia porcellus (Guinea pig).